Consider the following 533-residue polypeptide: Cytochrome P450 monooxygenase ltmK (533 aa).

A helical transmembrane segment spans residues 27–47 (VHWLQVIVALLVLIVCIFLYW). N-linked (GlcNAc...) asparagine glycosylation is present at asparagine 116. Residue cysteine 473 coordinates heme. A glycan (N-linked (GlcNAc...) asparagine) is linked at asparagine 528.

This sequence belongs to the cytochrome P450 family. Heme serves as cofactor.

It is found in the membrane. The protein operates within secondary metabolite biosynthesis. Its function is as follows. Cytochrome P450 monooxygenase; part of the gene clusters that mediates the biosynthesis of lolitrems, indole-diterpene mycotoxins that are potent tremorgens in mammals, and are synthesized by clavicipitaceous fungal endophytes in association with their grass hosts. The geranylgeranyl diphosphate (GGPP) synthase ltmG is proposed to catalyze the first step in lolitrem biosynthesis. LtmG catalyzes a series of iterative condensations of isopentenyl diphosphate (IPP) with dimethylallyl diphosphate (DMAPP), geranyl diphosphate (GPP), and farnesyl diphosphate (FPP), to form GGPP. GGPP then condenses with indole-3-glycerol phosphate to form 3-geranylgeranylindole, an acyclic intermediate, to be incorporated into paxilline. Either ltmG or ltmC could be responsible for this step, as both are putative prenyl transferases. The FAD-dependent monooxygenase ltmM then catalyzes the epoxidation of the two terminal alkenes of the geranylgeranyl moiety, which is subsequently cyclized by ltmB, to paspaline. The cytochrome P450 monooxygenases ltmQ and ltmP can sequentially oxidize paspaline to terpendole E and terpendole F. Alternatively, ltmP converts paspaline to an intermediate which is oxidized by ltmQ to terpendole F. LtmF, ltmK, ltmE and ltmJ appear to be unique to the epichloe endophytes. The prenyltransferase ltmF is involved in the 27-hydroxyl-O-prenylation. The cytochrome P450 monooxygenase ltmK is required for the oxidative acetal ring formation. The multi-functional prenyltransferase ltmE is required for C20- and C21-prenylations of the indole ring of paspalanes and acts together with the cytochrome P450 monooxygenase ltmJ to yield lolitremanes by multiple oxidations and ring closures. The stereoisomer pairs of lolitriol and lolitrem N or lolitrem B and lolitrem F may be attributed to variations in the way in which ring closure can occur under the action of ltmJ. While the major product of this pathway is lolitrem B, the prenyl transferases and cytochrome P450 monooxygenases identified in this pathway have a remarkable versatility in their regio- and stereo-specificities to generate a diverse range of metabolites that are products of a metabolic grid rather than a linear pathway. The protein is Cytochrome P450 monooxygenase ltmK of Epichloe festucae var. lolii (Neotyphodium lolii).